We begin with the raw amino-acid sequence, 470 residues long: Proton-coupled amino acid transporter 3 (470 aa).

The Cytoplasmic segment spans residues 1–46; sequence MSLLGRDYNSELNSLDNGPQSPSESSSSITSENVHPAGEAGLSMMQ. Residues 10 to 20 show a composition bias toward polar residues; sequence SELNSLDNGPQ. The disordered stretch occupies residues 10–33; that stretch reads SELNSLDNGPQSPSESSSSITSEN. Residues 21-31 show a composition bias toward low complexity; the sequence is SPSESSSSITS. Residues 47 to 67 traverse the membrane as a helical segment; sequence TLIHLLKCNIGTGLLGLPLAI. Residues 68-71 are Extracellular-facing; the sequence is KNAG. A helical membrane pass occupies residues 72 to 92; that stretch reads LLVGPVSLLAIGVLTVHCMVI. The Cytoplasmic portion of the chain corresponds to 93–137; it reads LLNCAQHLSQRLQKTFVNYGEATMYGLETCPNTWLRAHAVWGRYT. Residues 138-158 form a helical membrane-spanning segment; that stretch reads VSFLLVITQLGFCSVYFMFMA. Topologically, residues 159–185 are extracellular; sequence DNLQQMVEKAHVTSNICQPREILTLTP. The chain crosses the membrane as a helical span at residues 186–206; it reads ILDIRFYMLIILPFLILLVFI. Residues 207 to 210 lie on the Cytoplasmic side of the membrane; it reads QNLK. Residues 211–231 form a helical membrane-spanning segment; the sequence is VLSVFSTLANITTLGSMALIF. At 232 to 252 the chain is on the extracellular side; the sequence is EYIMEGIPYPSNLPLMANWKT. A helical membrane pass occupies residues 253-273; sequence FLLFFGTAIFTFEGVGMVLPL. At 274–284 the chain is on the cytoplasmic side; sequence KNQMKHPQQFS. A helical transmembrane segment spans residues 285 to 305; the sequence is FVLYLGMSIVIILYILLGTLG. The Extracellular segment spans residues 306–337; it reads YMKFGSDTQASITLNLPNCWLYQSVKLMYSIG. The helical transmembrane segment at 338–358 threads the bilayer; sequence IFFTYALQFHVPAEIIIPFAI. The Cytoplasmic segment spans residues 359–367; that stretch reads SQVSESWAL. A helical membrane pass occupies residues 368 to 388; sequence FVDLSVRSALVCLTCVSAILI. The Extracellular portion of the chain corresponds to 389–392; it reads PRLD. A helical membrane pass occupies residues 393-413; that stretch reads LVISLVGSVSSSALALIIPAL. Residues 414-425 are Cytoplasmic-facing; sequence LEIVIFYSEDMS. Residues 426-446 form a helical membrane-spanning segment; that stretch reads CVTIAKDIMISIVGLLGCIFG. Topologically, residues 447–470 are extracellular; that stretch reads TYQALYELPQPISHSMANSTGVHA.

Belongs to the amino acid/polyamine transporter 2 family. In terms of tissue distribution, specifically expressed in testis.

Its subcellular location is the membrane. The chain is Proton-coupled amino acid transporter 3 (SLC36A3) from Homo sapiens (Human).